We begin with the raw amino-acid sequence, 424 residues long: CinA-like protein (424 aa).

The protein belongs to the CinA family.

This chain is CinA-like protein, found in Prochlorococcus marinus (strain MIT 9301).